Reading from the N-terminus, the 142-residue chain is MLLSADDKKHIKAIMPAIAAHGDKFGGEALYRMFIVNPKTKTYFPSFDFHHNSKQISAHGKKVVDALNEASNHLDNIAGSMSKLSDLHAYDLRVDPGNFPLLAHNILVVVAMNFPKQFDPATHKALDKFLATVSTVLTSKYR.

Residues 2-142 enclose the Globin domain; it reads LLSADDKKHI…VSTVLTSKYR (141 aa). H59 contributes to the O2 binding site. H88 contacts heme b.

The protein belongs to the globin family. Heterotetramer of two alpha chains and two beta chains. As to expression, red blood cells.

Involved in oxygen transport from the lung to the various peripheral tissues. This Xenopus laevis (African clawed frog) protein is Hemoglobin subunit alpha-1 (hba1).